The following is a 222-amino-acid chain: Chorionic somatomammotropin hormone-like 1 (222 aa).

The signal sequence occupies residues 1–26 (MAAGSRTSLLLAFALLCLPWLQEAGA). Zn(2+)-binding residues include H44 and E205. C213 and C220 form a disulfide bridge.

The protein belongs to the somatotropin/prolactin family.

It localises to the secreted. May be a novel gestational hormone required to compensate for absence of other members of the GH/CS cluster during gestation. In Homo sapiens (Human), this protein is Chorionic somatomammotropin hormone-like 1 (CSHL1).